The sequence spans 689 residues: Translation initiation factor IF-2 (689 aa).

A disordered region spans residues Asp-41–Ala-109. Over residues Arg-61–Arg-70 the composition is skewed to basic residues. Over residues Arg-80–Arg-94 the composition is skewed to low complexity. Residues Ala-96 to Ala-109 show a composition bias toward basic and acidic residues. One can recognise a tr-type G domain in the interval Glu-192 to Arg-361. Residues Gly-201–Thr-208 are G1. Gly-201–Thr-208 contacts GTP. Residues Gly-226–His-230 are G2. Residues Asp-247–Gly-250 are G3. Residues Asp-247–His-251 and Asn-301–Asp-304 contribute to the GTP site. The tract at residues Asn-301–Asp-304 is G4. Residues Ser-337–Lys-339 form a G5 region.

This sequence belongs to the TRAFAC class translation factor GTPase superfamily. Classic translation factor GTPase family. IF-2 subfamily.

It localises to the cytoplasm. Functionally, one of the essential components for the initiation of protein synthesis. Protects formylmethionyl-tRNA from spontaneous hydrolysis and promotes its binding to the 30S ribosomal subunits. Also involved in the hydrolysis of GTP during the formation of the 70S ribosomal complex. This Rubrobacter xylanophilus (strain DSM 9941 / JCM 11954 / NBRC 16129 / PRD-1) protein is Translation initiation factor IF-2.